The following is a 423-amino-acid chain: SH2 domain-containing protein 5 (423 aa).

The region spanning 28–146 is the PID domain; the sequence is AQYVGSFPVD…LLCRSFQLAY (119 aa). Residues 296–392 enclose the SH2 domain; it reads WAFAGISRPC…LDMGRLNPTY (97 aa). Residues 392-423 form a disordered region; the sequence is YEEQDCGPPGRPPRTLRPLSHAKSEAELQGLG.

In terms of assembly, interacts with BCR.

Its subcellular location is the postsynaptic density. Its function is as follows. May be involved in synaptic plasticity regulation through the control of Rac-GTP levels. This chain is SH2 domain-containing protein 5, found in Homo sapiens (Human).